Consider the following 506-residue polypeptide: Lysine--tRNA ligase (506 aa).

Mg(2+) is bound by residues Glu-416 and Glu-423.

It belongs to the class-II aminoacyl-tRNA synthetase family. As to quaternary structure, homodimer. Mg(2+) serves as cofactor.

It localises to the cytoplasm. The catalysed reaction is tRNA(Lys) + L-lysine + ATP = L-lysyl-tRNA(Lys) + AMP + diphosphate. The polypeptide is Lysine--tRNA ligase (Baumannia cicadellinicola subsp. Homalodisca coagulata).